We begin with the raw amino-acid sequence, 78 residues long: Exodeoxyribonuclease 7 small subunit (78 aa).

This sequence belongs to the XseB family. As to quaternary structure, heterooligomer composed of large and small subunits.

Its subcellular location is the cytoplasm. It carries out the reaction Exonucleolytic cleavage in either 5'- to 3'- or 3'- to 5'-direction to yield nucleoside 5'-phosphates.. Bidirectionally degrades single-stranded DNA into large acid-insoluble oligonucleotides, which are then degraded further into small acid-soluble oligonucleotides. The polypeptide is Exodeoxyribonuclease 7 small subunit (Psychromonas ingrahamii (strain DSM 17664 / CCUG 51855 / 37)).